The primary structure comprises 969 residues: RNA polymerase-associated protein RapA (969 aa).

The region spanning 162–339 is the Helicase ATP-binding domain; sequence EVGQRVAPRV…FARLALLDAD (178 aa). 175–182 is an ATP binding site; sequence DEVGLGKT. Residues 285 to 288 carry the DEAH box motif; that stretch reads DEAH. A Helicase C-terminal domain is found at 492–663; the sequence is RIEWLITFLK…GFLKNPQAVG (172 aa).

This sequence belongs to the SNF2/RAD54 helicase family. RapA subfamily. In terms of assembly, interacts with the RNAP. Has a higher affinity for the core RNAP than for the holoenzyme. Its ATPase activity is stimulated by binding to RNAP.

Functionally, transcription regulator that activates transcription by stimulating RNA polymerase (RNAP) recycling in case of stress conditions such as supercoiled DNA or high salt concentrations. Probably acts by releasing the RNAP, when it is trapped or immobilized on tightly supercoiled DNA. Does not activate transcription on linear DNA. Probably not involved in DNA repair. This is RNA polymerase-associated protein RapA from Actinobacillus pleuropneumoniae serotype 7 (strain AP76).